Here is a 271-residue protein sequence, read N- to C-terminus: Formamidopyrimidine-DNA glycosylase (271 aa).

Catalysis depends on P2, which acts as the Schiff-base intermediate with DNA. E3 functions as the Proton donor in the catalytic mechanism. The Proton donor; for beta-elimination activity role is filled by K57. DNA contacts are provided by H90, R109, and K151. Residues 236–270 form an FPG-type zinc finger; it reads HVYGRGGETCTQCGNLLSEIRLGQRTTVFCGICQT. R260 functions as the Proton donor; for delta-elimination activity in the catalytic mechanism.

Belongs to the FPG family. In terms of assembly, monomer. It depends on Zn(2+) as a cofactor.

The catalysed reaction is Hydrolysis of DNA containing ring-opened 7-methylguanine residues, releasing 2,6-diamino-4-hydroxy-5-(N-methyl)formamidopyrimidine.. It carries out the reaction 2'-deoxyribonucleotide-(2'-deoxyribose 5'-phosphate)-2'-deoxyribonucleotide-DNA = a 3'-end 2'-deoxyribonucleotide-(2,3-dehydro-2,3-deoxyribose 5'-phosphate)-DNA + a 5'-end 5'-phospho-2'-deoxyribonucleoside-DNA + H(+). Involved in base excision repair of DNA damaged by oxidation or by mutagenic agents. Acts as a DNA glycosylase that recognizes and removes damaged bases. Has a preference for oxidized purines, such as 7,8-dihydro-8-oxoguanine (8-oxoG). Has AP (apurinic/apyrimidinic) lyase activity and introduces nicks in the DNA strand. Cleaves the DNA backbone by beta-delta elimination to generate a single-strand break at the site of the removed base with both 3'- and 5'-phosphates. The polypeptide is Formamidopyrimidine-DNA glycosylase (Shewanella sp. (strain MR-4)).